A 453-amino-acid polypeptide reads, in one-letter code: Bifunctional protein GlmU (453 aa).

Residues 1-225 (MNIVILAAGT…EWETLGVNSK (225 aa)) are pyrophosphorylase. UDP-N-acetyl-alpha-D-glucosamine-binding positions include 6–9 (LAAG), K20, Q71, 76–77 (GT), 98–100 (YGD), G135, E150, N165, and N223. D100 is a Mg(2+) binding site. N223 contacts Mg(2+). The segment at 226 to 246 (QQLAELERIHQRNVADALLVA) is linker. The segment at 247 to 453 (GVTLADPARL…GYVRPTKKKS (207 aa)) is N-acetyltransferase. 2 residues coordinate UDP-N-acetyl-alpha-D-glucosamine: R329 and K347. The active-site Proton acceptor is H359. 2 residues coordinate UDP-N-acetyl-alpha-D-glucosamine: Y362 and N373. Acetyl-CoA is bound by residues A376, 382 to 383 (NY), S401, and A419.

The protein in the N-terminal section; belongs to the N-acetylglucosamine-1-phosphate uridyltransferase family. It in the C-terminal section; belongs to the transferase hexapeptide repeat family. Homotrimer. Requires Mg(2+) as cofactor.

The protein localises to the cytoplasm. It carries out the reaction alpha-D-glucosamine 1-phosphate + acetyl-CoA = N-acetyl-alpha-D-glucosamine 1-phosphate + CoA + H(+). The enzyme catalyses N-acetyl-alpha-D-glucosamine 1-phosphate + UTP + H(+) = UDP-N-acetyl-alpha-D-glucosamine + diphosphate. It functions in the pathway nucleotide-sugar biosynthesis; UDP-N-acetyl-alpha-D-glucosamine biosynthesis; N-acetyl-alpha-D-glucosamine 1-phosphate from alpha-D-glucosamine 6-phosphate (route II): step 2/2. The protein operates within nucleotide-sugar biosynthesis; UDP-N-acetyl-alpha-D-glucosamine biosynthesis; UDP-N-acetyl-alpha-D-glucosamine from N-acetyl-alpha-D-glucosamine 1-phosphate: step 1/1. It participates in bacterial outer membrane biogenesis; LPS lipid A biosynthesis. Its function is as follows. Catalyzes the last two sequential reactions in the de novo biosynthetic pathway for UDP-N-acetylglucosamine (UDP-GlcNAc). The C-terminal domain catalyzes the transfer of acetyl group from acetyl coenzyme A to glucosamine-1-phosphate (GlcN-1-P) to produce N-acetylglucosamine-1-phosphate (GlcNAc-1-P), which is converted into UDP-GlcNAc by the transfer of uridine 5-monophosphate (from uridine 5-triphosphate), a reaction catalyzed by the N-terminal domain. This Paraburkholderia xenovorans (strain LB400) protein is Bifunctional protein GlmU.